A 149-amino-acid polypeptide reads, in one-letter code: Large ribosomal subunit protein uL13 (149 aa).

Belongs to the universal ribosomal protein uL13 family. In terms of assembly, part of the 50S ribosomal subunit.

Its function is as follows. This protein is one of the early assembly proteins of the 50S ribosomal subunit, although it is not seen to bind rRNA by itself. It is important during the early stages of 50S assembly. The protein is Large ribosomal subunit protein uL13 of Thermotoga maritima (strain ATCC 43589 / DSM 3109 / JCM 10099 / NBRC 100826 / MSB8).